The primary structure comprises 1161 residues: MTISDKIRVYELSRDLKLENKDILDAAQKLSISVKSHSSSMSLEDAKKIKNLIRNGNSGKKIISVSKSSFKAANEQQNNIDNQNKDSNSRSKPLNKEKPSKESLNKKPLLNKPVNKEENSLISSNKKNTAKLKNPNPPSRISNLQSQVLPNSHNKTQHTIKTKNPNEKKNSTKIVQEKKSLNNNSPLRTKSPARPPIQLIEKPKNLTTSNKDIKANKKNDNSLNQRPQQANRLNNNNNFPKKNINNPRIKNTPELVGAPIRREDPKINSNRQNSNSRQPPSNIQASPNRPVIPNRQVTPNRPSNPNRQGVSNRPGGGQNRQGVPNRPGSPYRPGNPNRQGMSNRPGVGGQNRQGAPNRQGSPYRQGDPNRQGGNYRQGDLNRSGSKFNNQNPSGIRKPVAPNELMQLQKTNASDKEKLNRSNFEKQKVEPPKQKAKAPNSRLNASPTAKKTPHRSFTNNSKKPGRSDWDDSAKLEALRNKNPQKQRQKVHIIGENDDSLTSETSGYSGEKVSILSASLARPKKEKSEEPKSQKTTRQFKKKNKETTRQRQKRRAMELRAAKDAKQVRPEMIIVPEDNLTVQELADKLSLESSEIIKSLFFKGITATVTQSLDLATIETVAEEFGVPVLQDDVEEAAKKTVDMIETDDIESLIKRPPVITVMGHVDHGKTSLLDSIRESRVASGEAGGITQHIGAYQVEFEHESKKKKLTFLDTPGHEAFTAMRARGTKVTDVAVLVVAADDGCRPQTLEAISHARAAKVPIVVAINKIDKEGASPDRVKQELSEKDLIAEDWGGDVVMVPVSAIKKQNIDKLLEMILLVSEVEDLQANPERLAKGTVIEAHLDKAKGPVATLLVQNGTLKAGDVLAAGSVLGKIRAMVDEHGNRIKEAGPSCPVEALGFSEVPTAGDEFEVYPDEKTARGIVGERATDARATKLAQQMASRRVSLSSLSTQANDGELKELNLILKADVQGSVEAILGSLEQLPKNEVQVRVLLSAPGEITETDIDLAAASGSVIIGFNTSLASGAKRAADSNNVDIREYEVIYKLLEDIQSAMEGLLEPDLVEESLGQAEVRATFAVGKGAIAGCYIQSGKLQRNCSLRVLRSDKVIFEGNLDSLKRSKDDVKEVNTGFECGVGCDKFSTWNEGDIIEAFKFVTKKRTLNK.

The interval 67-561 is disordered; that stretch reads KSSFKAANEQ…RRAMELRAAK (495 aa). The segment covering 83–105 has biased composition (basic and acidic residues); the sequence is QNKDSNSRSKPLNKEKPSKESLN. The span at 139 to 154 shows a compositional bias: polar residues; that stretch reads SRISNLQSQVLPNSHN. Basic and acidic residues-rich tracts occupy residues 164–180 and 211–220; these read NPNEKKNSTKIVQEKKS and KDIKANKKND. Composition is skewed to low complexity over residues 224–250 and 268–282; these read NQRPQQANRLNNNNNFPKKNINNPRIK and NSNRQNSNSRQPPSN. 3 stretches are compositionally biased toward polar residues: residues 295 to 311, 352 to 362, and 380 to 393; these read RQVTPNRPSNPNRQGVS, RQGAPNRQGSP, and LNRSGSKFNNQNPS. Residues 412–432 are compositionally biased toward basic and acidic residues; the sequence is ASDKEKLNRSNFEKQKVEPPK. Residues 440–461 are compositionally biased toward polar residues; it reads SRLNASPTAKKTPHRSFTNNSK. Basic and acidic residues-rich tracts occupy residues 464 to 478 and 543 to 561; these read GRSDWDDSAKLEALR and KETTRQRQKRRAMELRAAK. Residues 653-830 enclose the tr-type G domain; that stretch reads KRPPVITVMG…EVEDLQANPE (178 aa). The interval 662 to 669 is G1; it reads GHVDHGKT. 662 to 669 contributes to the GTP binding site; sequence GHVDHGKT. The G2 stretch occupies residues 687–691; sequence GITQH. The interval 712 to 715 is G3; sequence DTPG. GTP-binding positions include 712–716 and 766–769; these read DTPGH and NKID. Positions 766–769 are G4; it reads NKID. A G5 region spans residues 802–804; that stretch reads SAI.

The protein belongs to the TRAFAC class translation factor GTPase superfamily. Classic translation factor GTPase family. IF-2 subfamily.

It localises to the cytoplasm. In terms of biological role, one of the essential components for the initiation of protein synthesis. Protects formylmethionyl-tRNA from spontaneous hydrolysis and promotes its binding to the 30S ribosomal subunits. Also involved in the hydrolysis of GTP during the formation of the 70S ribosomal complex. This chain is Translation initiation factor IF-2, found in Prochlorococcus marinus (strain MIT 9515).